The primary structure comprises 400 residues: Dihydrolipoyllysine-residue succinyltransferase component of 2-oxoglutarate dehydrogenase complex (400 aa).

The Lipoyl-binding domain occupies 2–77 (GVKIIVPSLG…AVGEEIGDIN (76 aa)). Position 43 is an N6-lipoyllysine (lysine 43). Residues 85 to 97 (NSNEAAKPQTASQ) are compositionally biased toward polar residues. The tract at residues 85–113 (NSNEAAKPQTASQPVPEKVPKKPAVANNT) is disordered. The Peripheral subunit-binding (PSBD) domain occupies 113 to 150 (TLAPSVQKLVTENKLDPNNIKGTGKDGRITKGDVLETM). Residues histidine 371 and aspartate 375 contribute to the active site.

The protein belongs to the 2-oxoacid dehydrogenase family. As to quaternary structure, forms a 24-polypeptide structural core with octahedral symmetry. Part of the 2-oxoglutarate dehydrogenase (OGDH) complex composed of E1 (2-oxoglutarate dehydrogenase), E2 (dihydrolipoamide succinyltransferase) and E3 (dihydrolipoamide dehydrogenase); the complex contains multiple copies of the three enzymatic components (E1, E2 and E3). Requires (R)-lipoate as cofactor.

It carries out the reaction N(6)-[(R)-dihydrolipoyl]-L-lysyl-[protein] + succinyl-CoA = N(6)-[(R)-S(8)-succinyldihydrolipoyl]-L-lysyl-[protein] + CoA. It participates in amino-acid degradation; L-lysine degradation via saccharopine pathway; glutaryl-CoA from L-lysine: step 6/6. In terms of biological role, E2 component of the 2-oxoglutarate dehydrogenase (OGDH) complex which catalyzes the second step in the conversion of 2-oxoglutarate to succinyl-CoA and CO(2). This is Dihydrolipoyllysine-residue succinyltransferase component of 2-oxoglutarate dehydrogenase complex (sucB) from Rickettsia bellii (strain RML369-C).